The primary structure comprises 434 residues: Alpha-enolase (434 aa).

Serine 40 provides a ligand contact to Mg(2+). Substrate-binding residues include histidine 158 and glutamate 167. Residue glutamate 210 is the Proton donor of the active site. Aspartate 245, glutamate 293, and aspartate 318 together coordinate Mg(2+). 2 residues coordinate substrate: glutamate 293 and aspartate 318. Lysine 343 (proton acceptor) is an active-site residue. Residues 370–373 (SHRS) and lysine 394 contribute to the substrate site.

The protein belongs to the enolase family. As to quaternary structure, homodimer. It depends on Mg(2+) as a cofactor.

Its subcellular location is the cytoplasm. It carries out the reaction (2R)-2-phosphoglycerate = phosphoenolpyruvate + H2O. Its pathway is carbohydrate degradation; glycolysis; pyruvate from D-glyceraldehyde 3-phosphate: step 4/5. This Xenopus laevis (African clawed frog) protein is Alpha-enolase (eno1).